The primary structure comprises 706 residues: Polyribonucleotide nucleotidyltransferase (706 aa).

Residues aspartate 486 and aspartate 492 each contribute to the Mg(2+) site. Residues 553 to 612 (PRIHTIKISTDKIKDVIGKGGSVIRALTEETGTTIEIEDDGTVKIASTDGEKAKHAIRRI) enclose the KH domain. The S1 motif domain maps to 622–690 (GRVYQGKVTR…RQGRVRLSIK (69 aa)).

This sequence belongs to the polyribonucleotide nucleotidyltransferase family. Component of the RNA degradosome, which is a multiprotein complex involved in RNA processing and mRNA degradation. Mg(2+) is required as a cofactor.

Its subcellular location is the cytoplasm. It catalyses the reaction RNA(n+1) + phosphate = RNA(n) + a ribonucleoside 5'-diphosphate. In terms of biological role, involved in mRNA degradation. Catalyzes the phosphorolysis of single-stranded polyribonucleotides processively in the 3'- to 5'-direction. This chain is Polyribonucleotide nucleotidyltransferase, found in Pectobacterium carotovorum subsp. carotovorum (strain PC1).